Here is a 222-residue protein sequence, read N- to C-terminus: 7-cyano-7-deazaguanine synthase (222 aa).

ATP is bound at residue Leu7–Leu17. Cys191, Cys199, Cys202, and Cys205 together coordinate Zn(2+).

This sequence belongs to the QueC family. It depends on Zn(2+) as a cofactor.

It carries out the reaction 7-carboxy-7-deazaguanine + NH4(+) + ATP = 7-cyano-7-deazaguanine + ADP + phosphate + H2O + H(+). It participates in purine metabolism; 7-cyano-7-deazaguanine biosynthesis. Its function is as follows. Catalyzes the ATP-dependent conversion of 7-carboxy-7-deazaguanine (CDG) to 7-cyano-7-deazaguanine (preQ(0)). This Trichodesmium erythraeum (strain IMS101) protein is 7-cyano-7-deazaguanine synthase.